The primary structure comprises 87 residues: Large ribosomal subunit protein bL31B-2/bL31B-3 (87 aa).

This sequence belongs to the bacterial ribosomal protein bL31 family. Type B subfamily. As to quaternary structure, part of the 50S ribosomal subunit.

The polypeptide is Large ribosomal subunit protein bL31B-2/bL31B-3 (rpmE2-2) (Escherichia coli O157:H7).